A 340-amino-acid chain; its full sequence is Phenylalanine--tRNA ligase alpha subunit (340 aa).

Residue Glu255 coordinates Mg(2+).

The protein belongs to the class-II aminoacyl-tRNA synthetase family. Phe-tRNA synthetase alpha subunit type 1 subfamily. As to quaternary structure, tetramer of two alpha and two beta subunits. Requires Mg(2+) as cofactor.

It is found in the cytoplasm. The catalysed reaction is tRNA(Phe) + L-phenylalanine + ATP = L-phenylalanyl-tRNA(Phe) + AMP + diphosphate + H(+). This is Phenylalanine--tRNA ligase alpha subunit from Moorella thermoacetica (strain ATCC 39073 / JCM 9320).